The chain runs to 398 residues: Cystathionine gamma-lyase (398 aa).

S50 carries the post-translational modification Phosphoserine. Residues R61, Y113, and R118 each coordinate substrate. An N6-(pyridoxal phosphate)lysine modification is found at K211. E338 serves as a coordination point for substrate.

The protein belongs to the trans-sulfuration enzymes family. In terms of assembly, homotetramer. Interacts with CALM in a calcium-dependent manner. Pyridoxal 5'-phosphate serves as cofactor.

The protein resides in the cytoplasm. The enzyme catalyses L,L-cystathionine + H2O = 2-oxobutanoate + L-cysteine + NH4(+). The catalysed reaction is L-homoserine = 2-oxobutanoate + NH4(+). It catalyses the reaction L-selenocystathionine + H2O = L-selenocysteine + 2-oxobutanoate + NH4(+). It carries out the reaction L-cysteine + H2O = hydrogen sulfide + pyruvate + NH4(+) + H(+). The enzyme catalyses L-homocysteine + H2O = 2-oxobutanoate + hydrogen sulfide + NH4(+) + H(+). Its pathway is amino-acid biosynthesis; L-cysteine biosynthesis; L-cysteine from L-homocysteine and L-serine: step 2/2. In terms of biological role, catalyzes the last step in the trans-sulfuration pathway from L-methionine to L-cysteine in a pyridoxal-5'-phosphate (PLP)-dependent manner, which consists on cleaving the L,L-cystathionine molecule into L-cysteine, ammonia and 2-oxobutanoate. Part of the L-cysteine derived from the trans-sulfuration pathway is utilized for biosynthesis of the ubiquitous antioxidant glutathione. Besides its role in the conversion of L-cystathionine into L-cysteine, it utilizes L-cysteine and L-homocysteine as substrates (at much lower rates than L,L-cystathionine) to produce hydrogen sulfide (H2S). In vitro, it converts two L-cysteine molecules into lanthionine and H2S, and two L-homocysteine molecules to homolanthionine and H2S, which can be particularly relevant under conditions of severe hyperhomocysteinemia. Lanthionine and homolanthionine are structural homologs of L,L-cystathionine that differ by the absence or presence of an extra methylene group, respectively. Acts as a cysteine-protein sulfhydrase by mediating sulfhydration of target proteins: sulfhydration consists of converting -SH groups into -SSH on specific cysteine residues of target proteins such as GAPDH, PTPN1 and NF-kappa-B subunit RELA, thereby regulating their function. By generating the gasotransmitter H2S, it participates in a number of physiological processes such as vasodilation, bone protection, and inflammation. Plays an essential role in myogenesis by contributing to the biogenesis of H2S in skeletal muscle tissue. Can also accept homoserine as substrate. Catalyzes the elimination of selenocystathionine (which can be derived from the diet) to yield selenocysteine, ammonia and 2-oxobutanoate. The chain is Cystathionine gamma-lyase (Cth) from Rattus norvegicus (Rat).